A 182-amino-acid polypeptide reads, in one-letter code: UPF0397 protein BT9727_2423 (182 aa).

The next 5 membrane-spanning stretches (helical) occupy residues 9–29, 40–60, 71–91, 114–134, and 142–162; these read VVAIGIGSALYGILGLWGFSI, AILTVFGALFGPVAGLLIGLI, WGIWWGWVISSGIIGFTMGFI, ITGLIGIVIAIIFAGAFDIIV, and IVIQVLGATIADVIVFLVLGL.

Belongs to the UPF0397 family.

Its subcellular location is the cell membrane. This chain is UPF0397 protein BT9727_2423, found in Bacillus thuringiensis subsp. konkukian (strain 97-27).